Consider the following 517-residue polypeptide: Enantioselective amidase (517 aa).

Residues Lys-96 and Ser-173 each act as charge relay system in the active site. Ser-197 functions as the Acyl-ester intermediate in the catalytic mechanism.

It belongs to the amidase family. In terms of assembly, homooctamer.

The catalysed reaction is a monocarboxylic acid amide + H2O = a monocarboxylate + NH4(+). This chain is Enantioselective amidase (amdA), found in Rhodococcus rhodochrous.